Reading from the N-terminus, the 142-residue chain is Hemoglobin subunit alpha-1 (142 aa).

A Globin domain is found at 2-142 (VLSPADKTNI…VSTVLTSKYR (141 aa)). His-59 contributes to the O2 binding site. His-88 is a heme b binding site.

This sequence belongs to the globin family. As to quaternary structure, heterotetramer of two alpha chains and two beta chains. Red blood cells.

Its function is as follows. Involved in oxygen transport from the lung to the various peripheral tissues. In Arctocephalus galapagoensis (Galapagoes fur seal), this protein is Hemoglobin subunit alpha-1.